Reading from the N-terminus, the 384-residue chain is Interstitial collagenase (384 aa).

Residues 1 to 25 form the signal peptide; the sequence is MLSGLWSSILALLGVFLQSVGEFRA. The propeptide at 26–88 is activation peptide; sequence ETQEQDVEIV…STCGVPDVGE (63 aa). The short motif at 79-86 is the Cysteine switch element; that stretch reads STCGVPDV. A Zn(2+)-binding site is contributed by Cys81. 2 residues coordinate Ca(2+): Asp113 and Asp129. Residues His139 and Asp141 each contribute to the Zn(2+) site. Ca(2+) contacts are provided by Asp146, Gly147, Gly149, and Asn151. His154 is a Zn(2+) binding site. Ca(2+) contacts are provided by Gly161, Gly163, and Asp165. His167 is a binding site for Zn(2+). The Ca(2+) site is built by Asp169, Glu170, and Glu172. His189 serves as a coordination point for Zn(2+). Glu190 is an active-site residue. 2 residues coordinate Zn(2+): His193 and His199. The tract at residues 218–239 is disordered; sequence LSQDDIDGPSGNPVQPRGPQTP. Cys242 and Cys381 are disulfide-bonded. Residues Asp249, Gln277, and Asp347 each coordinate Ca(2+). Hemopexin repeat units lie at residues 273–319 and 333–381; these read ELGL…FGFP and KQSM…WFNC.

This sequence belongs to the peptidase M10A family. It depends on Ca(2+) as a cofactor. Zn(2+) serves as cofactor.

Its subcellular location is the secreted. The protein resides in the extracellular space. It localises to the extracellular matrix. It catalyses the reaction Cleavage of the triple helix of collagen at about three-quarters of the length of the molecule from the N-terminus, at 775-Gly-|-Ile-776 in the alpha1(I) chain. Cleaves synthetic substrates and alpha-macroglobulins at bonds where P1' is a hydrophobic residue.. Its activity is regulated as follows. Can be activated without removal of the activation peptide. Functionally, cleaves collagens of types I, II, and III at one site in the helical domain. Also cleaves collagens of types VII and X. The protein is Interstitial collagenase of Aquarana catesbeiana (American bullfrog).